Consider the following 203-residue polypeptide: MNESPEKDQRHRERMERKKAVVDEKIAQARDERGVLLVHSGNGKGKSSSAFGMVARALGHGMKVGVVQFIKGAASTGEEAFFRRFPEEVSYHVMGEGFTWETQDRQRDIAKAEAAWKVAAQLLADPDVGLVVLDELNIALKHGYLELDRVLADIQARPAMQHVVVTGRGAQPGMIEAADTVTEMSLVKHAFKAGIKAQKGVEF.

A disordered region spans residues 1-21 (MNESPEKDQRHRERMERKKAV). Position 41-47 (41-47 (GNGKGKS)) interacts with ATP.

This sequence belongs to the Cob(I)alamin adenosyltransferase family. As to quaternary structure, monomer. Requires Mn(2+) as cofactor.

The protein resides in the cytoplasm. The enzyme catalyses 2 cob(II)yrinate a,c diamide + reduced [electron-transfer flavoprotein] + 2 ATP = 2 adenosylcob(III)yrinate a,c-diamide + 2 triphosphate + oxidized [electron-transfer flavoprotein] + 3 H(+). The catalysed reaction is 2 cob(II)alamin + reduced [electron-transfer flavoprotein] + 2 ATP = 2 adenosylcob(III)alamin + 2 triphosphate + oxidized [electron-transfer flavoprotein] + 3 H(+). It functions in the pathway cofactor biosynthesis; adenosylcobalamin biosynthesis; adenosylcobalamin from cob(II)yrinate a,c-diamide: step 2/7. In terms of biological role, required for both de novo synthesis of the corrin ring for the assimilation of exogenous corrinoids. Participates in the adenosylation of a variety of incomplete and complete corrinoids. In Pseudomonas aeruginosa (strain ATCC 15692 / DSM 22644 / CIP 104116 / JCM 14847 / LMG 12228 / 1C / PRS 101 / PAO1), this protein is Corrinoid adenosyltransferase (cobO).